Here is a 294-residue protein sequence, read N- to C-terminus: Single-stranded nucleic acid-binding protein (294 aa).

Residues 1 to 30 form a disordered region; it reads MSAEIEEATNAVNNLSINDSEQQPRAPTHK. Serine 2 bears the N-acetylserine mark. Serine 2 and serine 16 each carry phosphoserine. Polar residues predominate over residues 10–25; it reads NAVNNLSINDSEQQPR. One can recognise an RRM 1 domain in the interval 37–119; the sequence is DTIFIGNVAH…REIHIKRART (83 aa). Threonine 49 is modified (phosphothreonine). The residue at position 66 (serine 66) is a Phosphoserine. Phosphothreonine occurs at positions 91 and 119. Arginine 125 carries the post-translational modification Omega-N-methylarginine. The RNA-binding RGG-box stretch occupies residues 131–151; sequence RGGFRGRGGFRGGFRGGYRGG. Arginine 135, arginine 137, and arginine 141 each carry dimethylated arginine. Arginine 145 is modified (dimethylated arginine; alternate). The residue at position 145 (arginine 145) is an Omega-N-methylarginine; alternate. Residue arginine 149 is modified to Omega-N-methylarginine. Residues 151–169 show a composition bias toward gly residues; sequence GFRGRGNFRGRGGARGGFN. Positions 151–171 are disordered; it reads GFRGRGNFRGRGGARGGFNGQ. A dimethylated arginine mark is found at arginine 153, arginine 155, and arginine 159. 2 positions are modified to dimethylated arginine; alternate: arginine 161 and arginine 165. Residues arginine 161 and arginine 165 each carry the omega-N-methylarginine; alternate modification. Residues 186–274 enclose the RRM 2 domain; it reads DTLYINNVPF…RELTVDVAVI (89 aa). Threonine 242 carries the phosphothreonine modification. Phosphoserine is present on serine 244. Residues 275–294 form a disordered region; sequence RPENDEEEIEQETGSEEKQE. Residues 278 to 288 are compositionally biased toward acidic residues; it reads NDEEEIEQETG. Phosphothreonine is present on threonine 287. At serine 289 the chain carries Phosphoserine.

The protein belongs to the RRM GAR family. Associated with snR10 and snR11 small nuclear RNAs.

It localises to the cytoplasm. Its subcellular location is the nucleus. It is found in the nucleolus. The protein resides in the P-body. The protein localises to the stress granule. Functions in the transition of mRNAs from translation to an mRNP complex destined for decapping. High-copy-number suppressor of decapping defects. Overexpression suppresses decapping defects in both DCP1-2 and DCP2-7 mutations. Acts to promote translational repression of mRNA in conjunction with DHH1 and subsequent mRNA localization to P bodies. Promotes translational repression of mRNA during glucose deprivation. This Saccharomyces cerevisiae (strain ATCC 204508 / S288c) (Baker's yeast) protein is Single-stranded nucleic acid-binding protein (SBP1).